A 537-amino-acid polypeptide reads, in one-letter code: MDIFRILSRGAALKRSSNSDPGVKSESQNATKDKQNSLLRQVEKETDFFNTRKHTEVTKDIEDEAQDEAVPPPKITTEEDAAKLRKQNKVNVSGTDIPLPIGSFEDLIARCNLNRKLLANLIASGYSEPTAIQCEAIPASAEGRDLIACAPTGSGKTLAYLIPMAQALISSPKTKNYGIRGVVIAPTNELAIQIYQTLAPMCRGSNLNVTLLSKQVASKISSSIISANKFDVLICTPLRLIDLVKKEQVDLSKVEHLVIDEADKLFDHGFVEQTDEILSHCTLPTRRTSMFSATIPSGVEEMANSIMKDQIRIIVGHKEGASTSIDQKLVFTGNEEGKLLAIRQMVQQGEFKPPIIIFLQSIPRAKALFHELIYDKLNVEVIHAERTPKQREEAIRRFKNGDAWVLITTDVLARGVDFKGVNLVINYDVPQTSQAYVHRIGRTGRGGKEGKAVTFFTKEDKLAIKPVLNVMKQSGCHEGYSEWMESMEKLTKKEKQQIKQHEIKRKKISTVPQVVSKKRKQRKEMIEASKRRKEETK.

The disordered stretch occupies residues 14–51 (KRSSNSDPGVKSESQNATKDKQNSLLRQVEKETDFFNT). Over residues 15–30 (RSSNSDPGVKSESQNA) the composition is skewed to polar residues. A compositionally biased stretch (basic and acidic residues) spans 31 to 47 (TKDKQNSLLRQVEKETD). The Q motif motif lies at 106 to 134 (DLIARCNLNRKLLANLIASGYSEPTAIQC). One can recognise a Helicase ATP-binding domain in the interval 137–313 (IPASAEGRDL…NSIMKDQIRI (177 aa)). 150–157 (APTGSGKT) serves as a coordination point for ATP. Residues 260–263 (DEAD) carry the DEAD box motif. A Helicase C-terminal domain is found at 324–488 (SIDQKLVFTG…GYSEWMESME (165 aa)). Positions 512 to 537 (PQVVSKKRKQRKEMIEASKRRKEETK) are disordered. Residues 523–537 (KEMIEASKRRKEETK) are compositionally biased toward basic and acidic residues.

Belongs to the DEAD box helicase family. DDX52/ROK1 subfamily. In terms of assembly, interacts with the U3 snoRNA and is associated with the 90S and 40S pre-ribosomes.

The protein resides in the nucleus. It is found in the nucleolus. It carries out the reaction ATP + H2O = ADP + phosphate + H(+). In terms of biological role, ATP-dependent RNA helicase involved in 40S ribosomal subunit biogenesis. Required for the processing and cleavage of 35S pre-rRNA at sites A0, A1, and A2, leading to mature 18S rRNA. In Meyerozyma guilliermondii (strain ATCC 6260 / CBS 566 / DSM 6381 / JCM 1539 / NBRC 10279 / NRRL Y-324) (Yeast), this protein is ATP-dependent RNA helicase ROK1 (ROK1).